Consider the following 302-residue polypeptide: Protein transport protein SEC13 homolog A (302 aa).

6 WD repeats span residues 9–48 (GHSD…GSQH), 54–95 (GHRG…QWTQ), 101–142 (DHKV…GWDT), 148–201 (AHPV…WKMD), 208–251 (KHTD…EQWE), and 257–296 (DFKT…EWEQ).

The protein belongs to the WD repeat SEC13 family. Interacts with MAG5, SEC31A and SEC31B.

It localises to the golgi apparatus. The protein resides in the endoplasmic reticulum. Functionally, required for protein transport from the endoplasmic reticulum to the Golgi apparatus. The protein is Protein transport protein SEC13 homolog A of Arabidopsis thaliana (Mouse-ear cress).